The sequence spans 155 residues: Small ribosomal subunit protein uS9 (155 aa).

This sequence belongs to the universal ribosomal protein uS9 family.

This chain is Small ribosomal subunit protein uS9, found in Sinorhizobium medicae (strain WSM419) (Ensifer medicae).